Reading from the N-terminus, the 486-residue chain is Protein nucleotidyltransferase YdiU (486 aa).

Residues Gly-90, Gly-92, Arg-93, Lys-113, Asp-125, Gly-126, Arg-176, and Arg-183 each coordinate ATP. Catalysis depends on Asp-252, which acts as the Proton acceptor. Mg(2+)-binding residues include Asn-253 and Asp-262. Asp-262 lines the ATP pocket.

The protein belongs to the SELO family. Mg(2+) serves as cofactor. Requires Mn(2+) as cofactor.

It catalyses the reaction L-seryl-[protein] + ATP = 3-O-(5'-adenylyl)-L-seryl-[protein] + diphosphate. It carries out the reaction L-threonyl-[protein] + ATP = 3-O-(5'-adenylyl)-L-threonyl-[protein] + diphosphate. The catalysed reaction is L-tyrosyl-[protein] + ATP = O-(5'-adenylyl)-L-tyrosyl-[protein] + diphosphate. The enzyme catalyses L-histidyl-[protein] + UTP = N(tele)-(5'-uridylyl)-L-histidyl-[protein] + diphosphate. It catalyses the reaction L-seryl-[protein] + UTP = O-(5'-uridylyl)-L-seryl-[protein] + diphosphate. It carries out the reaction L-tyrosyl-[protein] + UTP = O-(5'-uridylyl)-L-tyrosyl-[protein] + diphosphate. Functionally, nucleotidyltransferase involved in the post-translational modification of proteins. It can catalyze the addition of adenosine monophosphate (AMP) or uridine monophosphate (UMP) to a protein, resulting in modifications known as AMPylation and UMPylation. This Pseudomonas entomophila (strain L48) protein is Protein nucleotidyltransferase YdiU.